The sequence spans 2748 residues: Chalcone synthase cfoA (2748 aa).

An adenylation (A) domain region spans residues 13–511 (RHAGESCEKV…DTVPRTVIGK (499 aa)). The Carrier 1 domain maps to 535 to 620 (DLIEALVMAE…AVSTYLHGRL (86 aa)). O-(pantetheine 4'-phosphoryl)serine is present on S579. Positions 641 to 1073 (VEPIAIVSMA…GTNSHIILEQ (433 aa)) constitute a Ketosynthase family 3 (KS3) domain. Catalysis depends on for beta-ketoacyl synthase activity residues C813, H948, and H995. Positions 1196–1489 (FSGQGSWMPT…ATHGTVDKLL (294 aa)) constitute a Malonyl-CoA:ACP transacylase (MAT) domain. The tract at residues 1561 to 1842 (LGHEMIFNAT…ENSFSMTMTD (282 aa)) is dehydratase (DH) domain. Residues 1563–1707 (HEMIFNATSI…GTFQLISQPN (145 aa)) form an N-terminal hotdog fold region. Positions 1563–1866 (HEMIFNATSI…LRTWQPTVAG (304 aa)) constitute a PKS/mFAS DH domain. H1595 serves as the catalytic Proton acceptor; for dehydratase activity. The interval 1722–1866 (AESDVNISEA…LRTWQPTVAG (145 aa)) is C-terminal hotdog fold. The Proton donor; for dehydratase activity role is filled by D1784. The region spanning 2031–2210 (GTVLITGGTG…ALSLAWGPWA (180 aa)) is the Ketoreductase (KR) domain. A Carrier 2 domain is found at 2305–2383 (NRHDTLLGLV…ALVEYLLPRI (79 aa)). S2342 carries the post-translational modification O-(pantetheine 4'-phosphoryl)serine. The segment at 2386 to 2426 (EPQPEVDTDSDASTTAGDTSVSRDSGKEDELSPSSSVTTLA) is disordered. Residues 2396–2407 (DASTTAGDTSVS) are compositionally biased toward low complexity. The tract at residues 2519 to 2742 (VGLSVYSNLA…GAAGEIERWA (224 aa)) is thioester reductase (TE) domain.

It in the N-terminal section; belongs to the NRP synthetase family. The cofactor is pantetheine 4'-phosphate.

The protein operates within secondary metabolite biosynthesis; flavonoid biosynthesis. In terms of biological role, hybrid PKS-NRPS synthetase; part of the gene cluster that mediates the biosynthesis of chlorflavonin, a fungal flavonoid with acetolactate synthase inhibitory activity. Within the pathway, the PKS-NRPS cfoA, is responsible for the generation of the key precursor chalcone. The adenylation (A) domain activates benzoic acid or p-hydroxybenzoic acid which are transferred to the thiol group of the pantetheinyl residue of the T domain, and further transferred to the adjacent PKS portion of cfoA. Within the PKS portion of cfoA, benzoic acid or p-hydroxybenzoic acid act as starter units for respectively four malonyl-CoA molecules for elongation by the AT and KS domains. Afterwards, chalcone is cyclized through Claisen condensation and thereby released either spontaneously or catalyzed by the TE domain. Then, a new type of chalcone isomerase, cfoK, catalyzes the conversion of the chalcone into a flavanone by a histidine-mediated oxa-Michael addition mechanism. The desaturation of flavanone to flavone is catalyzed by a new type of flavone synthase, the flavin mononucleotide (FMN)-dependent oxidoreductase cfoJ. Monooxygenases cfoF, cfoG, and P450 cfoH are responsible for the hydroxylation of the flavonoid skeleton at sites C3, C8, and C2', respectively. Like cfoF, the dehydratase cfoI plays also a role in the hydroxylation of position C3. Methyltransferases cfoB, cfoC, and cfoD then catalyze the methylation of C7-OH, C8-OH, and C3-OH, respectively. Finally, the monooxygenase cfoE is responsible for the chlorination of flavonoid at position C3'. This is Chalcone synthase cfoA from Aspergillus candidus.